We begin with the raw amino-acid sequence, 173 residues long: Pectinesterase inhibitor 2 (173 aa).

A signal peptide spans 1 to 25 (MAAYLTNRVLMSSLMFFVMTGSLNA). A disulfide bond links Cys34 and Cys43. Asn39 and Asn63 each carry an N-linked (GlcNAc...) asparagine glycan. A disulfide bridge connects residues Cys99 and Cys139.

This sequence belongs to the PMEI family. Interacts with PPME1. As to expression, highest expression in flowers. Expressed exclusively at the pollen tube tip.

It localises to the secreted. It is found in the extracellular space. Its subcellular location is the apoplast. Inhibits pectin methylesterase (PME) from flowers, siliques and pollen tube. In Arabidopsis thaliana (Mouse-ear cress), this protein is Pectinesterase inhibitor 2.